Reading from the N-terminus, the 436-residue chain is Ribulose bisphosphate carboxylase large chain (436 aa).

K4 is subject to N6,N6,N6-trimethyllysine. 2 residues coordinate substrate: N113 and T163. Catalysis depends on K165, which acts as the Proton acceptor. K167 is a substrate binding site. 3 residues coordinate Mg(2+): K191, D193, and E194. The residue at position 191 (K191) is an N6-carboxylysine. H284 functions as the Proton acceptor in the catalytic mechanism. The substrate site is built by R285, H317, and S369.

This sequence belongs to the RuBisCO large chain family. Type I subfamily. In terms of assembly, heterohexadecamer of 8 large chains and 8 small chains; disulfide-linked. The disulfide link is formed within the large subunit homodimers. Mg(2+) is required as a cofactor. The disulfide bond which can form in the large chain dimeric partners within the hexadecamer appears to be associated with oxidative stress and protein turnover.

It is found in the plastid. The protein resides in the chloroplast. The catalysed reaction is 2 (2R)-3-phosphoglycerate + 2 H(+) = D-ribulose 1,5-bisphosphate + CO2 + H2O. It carries out the reaction D-ribulose 1,5-bisphosphate + O2 = 2-phosphoglycolate + (2R)-3-phosphoglycerate + 2 H(+). In terms of biological role, ruBisCO catalyzes two reactions: the carboxylation of D-ribulose 1,5-bisphosphate, the primary event in carbon dioxide fixation, as well as the oxidative fragmentation of the pentose substrate in the photorespiration process. Both reactions occur simultaneously and in competition at the same active site. This is Ribulose bisphosphate carboxylase large chain from Sanguinaria canadensis (Bloodroot).